We begin with the raw amino-acid sequence, 192 residues long: MTEYILLLVGTVLVNNFVLVKFLGLCPFMGVSKKLETAIGMGLATTFVLTLASVCAYLVESYVLRPLGIEYLRTMSFILVIAVVVQFTEMVVHKTSPTLYRLLGIFLPLITTNCAVLGVALLNINENHNFIESIIYGFGAAVGFSLVLILFASMRERIAAADVPVPFRGASIAMITAGLMSLAFMGFTGLVK.

6 helical membrane passes run 5 to 25 (ILLLVGTVLVNNFVLVKFLGL), 39 to 59 (IGMGLATTFVLTLASVCAYLV), 67 to 87 (LGIEYLRTMSFILVIAVVVQF), 102 to 122 (LLGIFLPLITTNCAVLGVALL), 134 to 154 (IIYGFGAAVGFSLVLILFASM), and 171 to 191 (SIAMITAGLMSLAFMGFTGLV).

Belongs to the NqrDE/RnfAE family. The complex is composed of six subunits: RnfA, RnfB, RnfC, RnfD, RnfE and RnfG.

The protein localises to the cell inner membrane. Part of a membrane-bound complex that couples electron transfer with translocation of ions across the membrane. The protein is Ion-translocating oxidoreductase complex subunit A of Vibrio campbellii (strain ATCC BAA-1116).